The following is a 438-amino-acid chain: sn-glycerol-3-phosphate-binding periplasmic protein UgpB (438 aa).

The signal sequence occupies residues 1–23 (MKPLRYTASALALGLALMANAQA). Sn-glycerol 3-phosphate-binding residues include Tyr65, Glu89, Ser144, Ser270, Gly307, Tyr346, and Arg397.

It belongs to the bacterial solute-binding protein 1 family. As to quaternary structure, the complex is composed of two ATP-binding proteins (UgpC), two transmembrane proteins (UgpA and UgpE) and a solute-binding protein (UgpB).

Its subcellular location is the periplasm. Its function is as follows. Part of the ABC transporter complex UgpBAEC involved in sn-glycerol-3-phosphate (G3P) import. Binds G3P. This is sn-glycerol-3-phosphate-binding periplasmic protein UgpB (ugpB) from Escherichia coli O6:K15:H31 (strain 536 / UPEC).